A 947-amino-acid chain; its full sequence is Bifunctional glutamine synthetase adenylyltransferase/adenylyl-removing enzyme (947 aa).

Residues 1 to 440 are adenylyl removase; that stretch reads MTPLSSPLSQ…VFNELIGDDE (440 aa). The adenylyl transferase stretch occupies residues 450 to 947; the sequence is SEPWREVWQD…ASWRKWLVAV (498 aa).

Belongs to the GlnE family. Mg(2+) is required as a cofactor.

It catalyses the reaction [glutamine synthetase]-O(4)-(5'-adenylyl)-L-tyrosine + phosphate = [glutamine synthetase]-L-tyrosine + ADP. The enzyme catalyses [glutamine synthetase]-L-tyrosine + ATP = [glutamine synthetase]-O(4)-(5'-adenylyl)-L-tyrosine + diphosphate. Functionally, involved in the regulation of glutamine synthetase GlnA, a key enzyme in the process to assimilate ammonia. When cellular nitrogen levels are high, the C-terminal adenylyl transferase (AT) inactivates GlnA by covalent transfer of an adenylyl group from ATP to specific tyrosine residue of GlnA, thus reducing its activity. Conversely, when nitrogen levels are low, the N-terminal adenylyl removase (AR) activates GlnA by removing the adenylyl group by phosphorolysis, increasing its activity. The regulatory region of GlnE binds the signal transduction protein PII (GlnB) which indicates the nitrogen status of the cell. The polypeptide is Bifunctional glutamine synthetase adenylyltransferase/adenylyl-removing enzyme (Salmonella schwarzengrund (strain CVM19633)).